Consider the following 612-residue polypeptide: Alpha-1,3-galactosidase B (612 aa).

The N-terminal stretch at Met-1–Ala-19 is a signal peptide. The N-palmitoyl cysteine moiety is linked to residue Cys-20. Cys-20 carries S-diacylglycerol cysteine lipidation. PbH1 repeat units lie at residues Thr-431–Thr-453, Pro-454–Gly-476, and Cys-487–Ala-536.

It belongs to the glycosyl hydrolase 110 family. B subfamily.

The protein localises to the cell membrane. The catalysed reaction is Hydrolysis of terminal, non-reducing branched (1-&gt;3)-alpha-D-galactosidic residues, producing free D-galactose.. The enzyme catalyses Hydrolysis of terminal, non-reducing linear (1-&gt;3)-alpha-D-galactosidic residues, producing free D-galactose.. It catalyses the reaction Hydrolysis of terminal, non-reducing alpha-D-galactose residues in alpha-D-galactosides, including galactose oligosaccharides, galactomannans and galactolipids.. Its function is as follows. Alpha-galactosidase. Removes both branched alpha-1,3-linked galactose residues of blood group B antigens and linear alpha-1,3-linked galactose structures. The polypeptide is Alpha-1,3-galactosidase B (glaB) (Parabacteroides distasonis (strain ATCC 8503 / DSM 20701 / CIP 104284 / JCM 5825 / NCTC 11152)).